The following is an 808-amino-acid chain: Ribosome biogenesis protein BOP1 homolog (808 aa).

The tract at residues 1 to 56 (MTSPKGKPSPKRSAPAPTTAALTPRTEERTEGATSSASASASSHISSSFDSPRDDT) is disordered. Composition is skewed to low complexity over residues 12–24 (RSAP…ALTP) and 33–50 (ATSS…SSFD). 5 WD repeats span residues 430–469 (GHTA…LMKR), 640–680 (KFSE…RRFK), 682–720 (SGGV…KPYK), 724–766 (SHRG…DYNK), and 777–808 (KHQR…AWTE).

The protein belongs to the WD repeat BOP1/ERB1 family.

It is found in the nucleus. Its subcellular location is the nucleolus. It localises to the nucleoplasm. In terms of biological role, required for maturation of ribosomal RNAs and formation of the large ribosomal subunit. The polypeptide is Ribosome biogenesis protein BOP1 homolog (Leishmania infantum).